The following is a 249-amino-acid chain: Tumor necrosis factor ligand superfamily member 12 (249 aa).

Residues 1–21 (MAARRSQRRRGRRGEPGTALL) are Cytoplasmic-facing. A helical; Signal-anchor for type II membrane protein transmembrane segment spans residues 22–45 (APLVLSLGLALACLGLLLVVVSLG). Over 46-249 (SWATLSAQEP…LTYFGLFQVH (204 aa)) the chain is Extracellular. Residues 52-78 (AQEPSQEELTAEDRREPPELNPQTEES) are disordered. One can recognise a THD domain in the interval 107-248 (IAAHYEVHPR…FLTYFGLFQV (142 aa)). Residue N139 is glycosylated (N-linked (GlcNAc...) asparagine). An intrachain disulfide couples C191 to C210.

Belongs to the tumor necrosis factor family. As to quaternary structure, homotrimer. Interacts with the angiogenic factor AGGF1/VG5Q. The soluble form is produced from the membrane form by proteolytic processing. In terms of tissue distribution, widely expressed.

It is found in the cell membrane. The protein resides in the secreted. Functionally, binds to FN14 and possibly also to TNRFSF12/APO3. Weak inducer of apoptosis in some cell types. Mediates NF-kappa-B activation. Promotes angiogenesis and the proliferation of endothelial cells. Also involved in induction of inflammatory cytokines. Promotes IL8 secretion. The sequence is that of Tumor necrosis factor ligand superfamily member 12 (Tnfsf12) from Mus musculus (Mouse).